A 572-amino-acid polypeptide reads, in one-letter code: MAFNFNWSPLMADASFYTRAQDLLTAALNKSPKPPIIVDDIIVTELNLGSIPPELEILEIGDLAEDRFRGIFKMSYSGDAFLTLKTRVQANPLNTYLLTRPSFATPRPLAAATPLTIPLQITLSDFKLSGFVILVFSKQKGITVVFRNDPLESLKVSSTFDSIPFVRDFLQKEIEAQLRILFMDELPAIIHRLSLRLWVPEYRAGEELQTQTASANGEGPGQDPLASPPQDPVDALGNALNESEIESLSLDSSVETHSLFSQKNLLRLAALTDSQRTLSLFTPSIREVVYRAWTSPSDQTDASGSVTSPFFPVLSRTQSQVGSMSSFPDSASMVSSQSRSSTPFHTFSGYGLSLGAGRHSKAHARKRKKRVVDLRRPKTTDDAPSVSDESSFTESTSAPSICSAPLPVLDEQTDDPVTPPLSPDNDLHLPAIPERHRMSISRPALRRENASEMIRDTAECKPSSNAVGQAIQEEDLSATPRAAVRAHGASVLEKGKQDPDSSAGSSRQLSSTILPFINDNPTGGVVDQALVERLAGEIARRMRDEKFMASNACGPFWDRHSQEESPPPAYGH.

One can recognise an SMP-LTD domain in the interval 1–195; sequence MAFNFNWSPL…LPAIIHRLSL (195 aa). Disordered stretches follow at residues 212-236, 355-426, 487-507, and 552-572; these read TASANGEGPGQDPLASPPQDPVDAL, GAGR…PDND, HGASVLEKGKQDPDSSAGSSR, and ACGPFWDRHSQEESPPPAYGH. Positions 358 to 370 are enriched in basic residues; that stretch reads RHSKAHARKRKKR. The span at 371 to 381 shows a compositional bias: basic and acidic residues; sequence VVDLRRPKTTD. Residues 387 to 400 are compositionally biased toward polar residues; that stretch reads SDESSFTESTSAPS.

This sequence belongs to the MDM34 family. As to quaternary structure, component of the ER-mitochondria encounter structure (ERMES) or MDM complex, composed of mmm1, mdm10, mdm12 and mdm34.

It localises to the mitochondrion outer membrane. In terms of biological role, component of the ERMES/MDM complex, which serves as a molecular tether to connect the endoplasmic reticulum (ER) and mitochondria. Components of this complex are involved in the control of mitochondrial shape and protein biogenesis, and function in nonvesicular lipid trafficking between the ER and mitochondria. Mdm34 is required for the interaction of the ER-resident membrane protein mmm1 and the outer mitochondrial membrane-resident beta-barrel protein mdm10. The chain is Mitochondrial distribution and morphology protein 34 from Aspergillus fumigatus (strain ATCC MYA-4609 / CBS 101355 / FGSC A1100 / Af293) (Neosartorya fumigata).